A 272-amino-acid chain; its full sequence is uncharacterized protein (272 aa).

Lysine 185 serves as the catalytic Schiff-base intermediate with substrate.

This sequence belongs to the DeoC/FbaB aldolase family.

This is an uncharacterized protein from Saccharolobus solfataricus (strain ATCC 35092 / DSM 1617 / JCM 11322 / P2) (Sulfolobus solfataricus).